Consider the following 377-residue polypeptide: MAEGNHRKKPLKVLESLGKDFLTGVLDNLVEQNVLNWKEEEKKKYYDAKTEDKVRVMADSMQEKQRMAGQMLLQTFFNIDQISPNKKAHPNMEAGPPESGESTDALKLCPHEEFLRLCKERAEEIYPIKERNNRTRLALIICNTEFDHLPPRNGADFDITGMKELLEGLDYSVDVEENLTARDMESALRAFATRPEHKSSDSTFLVLMSHGILEGICGTVHDEKKPDVLLYDTIFQIFNNRNCLSLKDKPKVIIVQACRGANRGELWVRDSPASLEVASSQSSENLEEDAVYKTHVEKDFIAFCSSTPHNVSWRDSTMGSIFITQLITCFQKYSWCCHLEEVFRKVQQSFETPRAKAQMPTIERLSMTRYFYLFPGN.

Residues Met1–Asp59 form a required for LPS-binding region. A propeptide spanning residues Met1–Asp80 is cleaved from the precursor. The region spanning Met1 to Asn91 is the CARD domain. An N-acetylalanine modification is found at Ala2. Ser83 carries the post-translational modification Phosphoserine. Residues Pro84–Asp104 are disordered. Catalysis depends on residues His210 and Cys258. Residues Ser271 to Asp289 constitute a propeptide that is removed on maturation. Arg314 bears the (Microbial infection) ADP-riboxanated arginine mark.

The protein belongs to the peptidase C14A family. As to quaternary structure, heterotetramer that consists of two anti-parallel arranged heterodimers, each one formed by a 20 kDa (Caspase-4 subunit p20) and a 10 kDa (Caspase-4 subunit p10) subunit. Upon direct LPS-binding, forms large homooligomers, resulting in its activation. These oligomers are often referred to as 'non-canonical inflammasomes'. In its precursor form, interacts with TMEM214; this interaction is required for association with the endoplasmic reticulum membrane. Interacts with CASP1. Interacts with NOD2. Interacts with SERPINB1; this interaction regulates CASP4 activity. In terms of assembly, heterotetramer that consists of two anti-parallel arranged heterodimers, each one formed by a 20 kDa (Caspase-4 subunit p20) and a 10 kDa (Caspase-4 subunit p10) subunit. (Microbial infection) Interacts with NleF protein from pathogenic E.coli; this interaction leads to enzyme inhibition. As to quaternary structure, (Microbial infection) Interacts with cathepsin CTSG; the interaction is promoted by the Td92 surface protein of the periodontal pathogen T.denticola and leads to CASP4 activation. In response to activation signals, undergoes autoproteolytic cleavage and activation. Post-translationally, (Microbial infection) ADP-riboxanation by S.flexneri OspC3 blocks CASP4 autoprocessing, preventing CASP4 activation and ability to recognize and cleave GSDMD, thereby thwarting the inflammasome/pyroptosis-mediated defense. Widely expressed, including in keratinocytes and colonic and small intestinal epithelial cells (at protein level). Not detected in brain.

Its subcellular location is the cytoplasm. The protein resides in the cytosol. It is found in the endoplasmic reticulum membrane. The protein localises to the mitochondrion. It localises to the inflammasome. Its subcellular location is the secreted. It catalyses the reaction Strict requirement for Asp at the P1 position. It has a preferred cleavage sequence of Tyr-Val-Ala-Asp-|- but also cleaves at Asp-Glu-Val-Asp-|-.. Activated by homooligomerization induced by direct binding to cytosolic LPS, in a TLR4-independent manner. In addition to LPS, CASP4/CASP11 may also be activated by oxidized phospholipid 1-palmitoyl-2-arachidonoyl- sn-glycero-3-phosphorylcholine, an oxidized phospholipid (oxPAPC), in dendritic cells, promoting adaptive immunity. The role of oxPAPC is however unclear and another report suggests that oxPAPC competes with LPS-binding and inhibits the non-canonical inflammasome in macrophages. In terms of biological role, inflammatory caspase that acts as the effector of the non-canonical inflammasome by mediating lipopolysaccharide (LPS)-induced pyroptosis. Also indirectly activates the NLRP3 and NLRP6 inflammasomes. Acts as a thiol protease that cleaves a tetrapeptide after an Asp residue at position P1: catalyzes cleavage of CGAS, GSDMD and IL18. Effector of the non-canonical inflammasome independently of NLRP3 inflammasome and CASP1: the non-canonical inflammasome promotes pyroptosis through GSDMD cleavage without involving secretion of cytokine IL1B. In the non-canonical inflammasome, CASP4 is activated by direct binding to the lipid A moiety of LPS without the need of an upstream sensor. LPS-binding promotes CASP4 activation and CASP4-mediated cleavage of GSDMD and IL18, followed by IL18 secretion through the GSDMD pore, pyroptosis of infected cells and their extrusion into the gut lumen. Also indirectly promotes secretion of mature cytokines (IL1A and HMGB1) downstream of GSDMD-mediated pyroptosis via activation of the NLRP3 and NLRP6 inflammasomes. Involved in NLRP3-dependent CASP1 activation and IL1B secretion in response to non-canonical activators, such as UVB radiation or cholera enterotoxin. Involved in NLRP6 inflammasome-dependent activation in response to lipoteichoic acid (LTA), a cell-wall component of Gram-positive bacteria, which leads to CASP1 activation and IL1B secretion. Involved in LPS-induced IL6 secretion; this activity may not require caspase enzymatic activity. The non-canonical inflammasome is required for innate immunity to cytosolic, but not vacuolar, bacteria. Plays a crucial role in the restriction of S.typhimurium replication in colonic epithelial cells during infection. Activation of the non-canonical inflammasome in brain endothelial cells can lead to excessive pyroptosis, leading to blood-brain barrier breakdown. Pyroptosis limits bacterial replication, while cytokine secretion promotes the recruitment and activation of immune cells and triggers mucosal inflammation. May also act as an activator of adaptive immunity in dendritic cells, following activation by oxidized phospholipid 1-palmitoyl-2-arachidonoyl- sn-glycero-3-phosphorylcholine, an oxidized phospholipid (oxPAPC). Involved in cell death induced by endoplasmic reticulum stress and by treatment with cytotoxic APP peptides found in Alzheimer's patient brains. Cleavage of GSDMD is not strictly dependent on the consensus cleavage site but depends on an exosite interface on CASP4 that recognizes and binds the Gasdermin-D, C-terminal (GSDMD-CT) part. Catalyzes cleavage and maturation of IL18; IL18 processing also depends of the exosite interface on CASP4. In contrast, it does not directly process IL1B. During non-canonical inflammasome activation, cuts CGAS and may play a role in the regulation of antiviral innate immune activation. Its function is as follows. (Microbial infection) In response to the Td92 surface protein of the periodontal pathogen T.denticola, activated by cathepsin CTSG which leads to production and secretion of IL1A and pyroptosis of gingival fibroblasts. This chain is Caspase-4, found in Homo sapiens (Human).